Here is a 2290-residue protein sequence, read N- to C-terminus: Autophagy-related protein 2 (2290 aa).

Positions 10–99 constitute a Chorein N-terminal domain; it reads WCKVMLQRYM…MCIEDLQLTF (90 aa). The segment at 829-1549 is required for epg-6 binding; that stretch reads DSMMKSVSAD…PNRDHSAFVV (721 aa). Disordered regions lie at residues 1678-1727, 1805-1851, 1898-1919, and 1967-2003; these read IGSK…LGDL, DDLF…DLTG, SETE…PARN, and EHGN…ERNK. The segment covering 1681–1692 has biased composition (low complexity); the sequence is KKTTPKTSVSSS. Residues 1714 to 1723 show a composition bias toward pro residues; the sequence is RPSPVQPPTP. Positions 1810–1830 are enriched in low complexity; that stretch reads QSYSSSSSETESESSAPQSSQ. Residues 1972 to 2011 are a coiled coil; the sequence is LDSIDNEDDNEKQKIEEEMEEDEKEEEEERNKEIQEAVER. Positions 1988-1999 are enriched in acidic residues; sequence EEMEEDEKEEEE.

Belongs to the ATG2 family. In terms of assembly, interacts with epg-6; the interaction is direct.

The protein resides in the preautophagosomal structure membrane. It is found in the lipid droplet. It localises to the endoplasmic reticulum membrane. Its subcellular location is the cytoplasm. It catalyses the reaction a 1,2-diacyl-sn-glycero-3-phospho-L-serine(in) = a 1,2-diacyl-sn-glycero-3-phospho-L-serine(out). The catalysed reaction is a 1,2-diacyl-sn-glycero-3-phosphoethanolamine(in) = a 1,2-diacyl-sn-glycero-3-phosphoethanolamine(out). In terms of biological role, lipid transfer protein involved in autophagosome assembly and in the distribution of atg-9 and atg-13 during the autophagy-mediated degradation of protein aggregates. Tethers the edge of the isolation membrane (IM) to the endoplasmic reticulum (ER) and mediates direct lipid transfer from ER to IM for IM expansion. Binds to the ER exit site (ERES), which is the membrane source for autophagosome formation, and extracts phospholipids from the membrane source to the IM for membrane expansion. Involved in autophagy-mediated degradation of ribosomal RNA and ribosomal proteins in lysosomes, which is essential for maintaining nucleotide homeostasis. In Caenorhabditis elegans, this protein is Autophagy-related protein 2.